The chain runs to 280 residues: MPADIMEKNSSSPVAATPASVNTTPDKPKTASEHRKSSKPIMEKRRRARINESLSQLKTLILDALKKDSSRHSKLEKADILEMTVKHLRNLQRAQMTAALSTDPSVLGKYRAGFSECMNEVTRFLSTCEGVNTEVRTRLLGHLANCMTQINAMTYPGQPHPALQAPPPPPPGPGGPQHAPFAPPPPLVPIPGGAAPPPGGAPCKLGSQAGEAAKVFGGFQVVPAPDGQFAFLIPNGAFAHSGPVIPVYTSNSGTSVGPNAVSPSSGPSLTADSMWRPWRN.

Positions 1–44 are disordered; that stretch reads MPADIMEKNSSSPVAATPASVNTTPDKPKTASEHRKSSKPIMEK. Residues 10–21 show a composition bias toward low complexity; it reads SSSPVAATPASV. Residues 26–35 are compositionally biased toward basic and acidic residues; that stretch reads DKPKTASEHR. The bHLH domain maps to 34–91; the sequence is HRKSSKPIMEKRRRARINESLSQLKTLILDALKKDSSRHSKLEKADILEMTVKHLRNL. Residues 110–143 enclose the Orange domain; it reads YRAGFSECMNEVTRFLSTCEGVNTEVRTRLLGHL. Disordered regions lie at residues 157–200 and 254–280; these read GQPH…PPGG and TSVG…PWRN. Composition is skewed to pro residues over residues 164–174 and 181–200; these read QAPPPPPPGPG and FAPP…PPGG. A compositionally biased stretch (polar residues) spans 254–271; it reads TSVGPNAVSPSSGPSLTA. The WRPW motif motif lies at 275–278; sequence WRPW.

As to quaternary structure, transcription repression requires formation of a complex with a corepressor protein of the Groucho/TLE family. Interacts (via WPRW motif) with TLE1, and more weakly with TLE2. Interacts with HES6. Interacts with SIRT1. Interacts with an FA complex, composed of FANCA, FANCF, FANCG and FANCL, but not of FANCC, nor FANCE. In terms of processing, (Microbial infection) Ubiquitinated via human cytomegalovirus/HCMV protein IE1 that assembles a HES1 ubiquitination complex; leading to HES1 proteasomal degradation.

It localises to the nucleus. Functionally, transcriptional repressor of genes that require a bHLH protein for their transcription. May act as a negative regulator of myogenesis by inhibiting the functions of MYOD1 and ASH1. Binds DNA on N-box motifs: 5'-CACNAG-3' with high affinity and on E-box motifs: 5'-CANNTG-3' with low affinity. May play a role in a functional FA core complex response to DNA cross-link damage, being required for the stability and nuclear localization of FA core complex proteins, as well as for FANCD2 monoubiquitination in response to DNA damage. The sequence is that of Transcription factor HES-1 (HES1) from Homo sapiens (Human).